The chain runs to 239 residues: MAKYKRVVLKLSGEALAGEQGYGIDPEVIQSIASQIKEIVELDVEVAVVVGGGNIWRGMAGSAKGMDRATADYMGMLATVMNSLALQDSLENLDVQSRVQTSIEMRQVAEPYIRRRAIRHLEKKRVVIFAAGTGNPYFSTDTTAALRAAEIEAEVILMAKNKVDGVYNAEPSVDVNAKKYTSISYLDVLKEGLAVMDSTASSLCMDNNIPLIVFSIMEEGNIKKAVLGEEIGTVVRGSN.

10–13 (KLSG) is an ATP binding site. Residues 18–23 (GEQGYG) are involved in allosteric activation by GTP. Residue Gly-52 coordinates UMP. ATP is bound by residues Gly-53 and Arg-57. Residues Asp-72 and 133–140 (TGNPYFST) each bind UMP. ATP-binding residues include Asn-161, Tyr-167, and Glu-170.

It belongs to the UMP kinase family. Homohexamer.

It is found in the cytoplasm. The enzyme catalyses UMP + ATP = UDP + ADP. It participates in pyrimidine metabolism; CTP biosynthesis via de novo pathway; UDP from UMP (UMPK route): step 1/1. Its activity is regulated as follows. Allosterically activated by GTP. Inhibited by UTP. Its function is as follows. Catalyzes the reversible phosphorylation of UMP to UDP. This is Uridylate kinase from Halalkalibacterium halodurans (strain ATCC BAA-125 / DSM 18197 / FERM 7344 / JCM 9153 / C-125) (Bacillus halodurans).